The chain runs to 238 residues: Ankyrin repeat domain-containing protein 49 (238 aa).

A disordered region spans residues threonine 38–lysine 57. Phosphoserine is present on serine 48. Positions serine 48 to lysine 57 are enriched in acidic residues. 4 ANK repeats span residues aspartate 72–glutamate 105, aspartate 106–alanine 135, aspartate 139–alanine 168, and glycine 172–asparagine 205.

In terms of tissue distribution, expressed in spermatogonia, spermatocytes and round spermatids.

The protein resides in the nucleus. Functionally, may have a role in spermatogenesis where it promotes autophagy in response to serum starvation, via the NF-kappaB pathway. In Mus musculus (Mouse), this protein is Ankyrin repeat domain-containing protein 49 (Ankrd49).